Consider the following 206-residue polypeptide: Large ribosomal subunit protein uL4 (206 aa).

The tract at residues 48-75 is disordered; sequence TQSAKTRAEVSGGGIKPWRQKGTGRARQ.

Belongs to the universal ribosomal protein uL4 family. As to quaternary structure, part of the 50S ribosomal subunit.

Its function is as follows. One of the primary rRNA binding proteins, this protein initially binds near the 5'-end of the 23S rRNA. It is important during the early stages of 50S assembly. It makes multiple contacts with different domains of the 23S rRNA in the assembled 50S subunit and ribosome. In terms of biological role, forms part of the polypeptide exit tunnel. This is Large ribosomal subunit protein uL4 from Clostridium botulinum (strain Loch Maree / Type A3).